The sequence spans 135 residues: Bacilliredoxin CHU_0972 (135 aa).

The protein belongs to the bacilliredoxin family.

The protein is Bacilliredoxin CHU_0972 of Cytophaga hutchinsonii (strain ATCC 33406 / DSM 1761 / CIP 103989 / NBRC 15051 / NCIMB 9469 / D465).